Here is a 128-residue protein sequence, read N- to C-terminus: Prokineticin-2 (128 aa).

The first 26 residues, 1-26 (MGDPRCAPLLLLLLLPLLFTPPAGDA), serve as a signal peptide directing secretion. Cystine bridges form between C33/C45, C39/C57, C44/C106, C67/C114, and C108/C124.

The protein belongs to the AVIT (prokineticin) family. In terms of tissue distribution, expressed in the SCN and among a few other discrete brain areas, including the islands of Calleja, media l preoptic area of the hypothalamus and the shell of the nucleus accumbens. Highly expressed in testis. In the SCN, expression subjected to high amplitude of circadian oscillation.

It localises to the secreted. In terms of biological role, may function as an output molecule from the suprachiasmatic nucleus (SCN) that transmits behavioral circadian rhythm. May also function locally within the SCN to synchronize output. Potently contracts gastrointestinal (GI) smooth muscle. The chain is Prokineticin-2 (Prok2) from Mus musculus (Mouse).